Here is a 456-residue protein sequence, read N- to C-terminus: O-phospho-L-seryl-tRNA:Cys-tRNA synthase 2 (456 aa).

Pyridoxal 5'-phosphate contacts are provided by residues 146-147, Asn251, and 274-276; these read AR and SGH. The residue at position 277 (Lys277) is an N6-(pyridoxal phosphate)lysine.

Belongs to the SepCysS family. As to quaternary structure, homodimer. Interacts with SepRS. The cofactor is pyridoxal 5'-phosphate.

The catalysed reaction is O-phospho-L-seryl-tRNA(Cys) + hydrogen sulfide + H(+) = L-cysteinyl-tRNA(Cys) + phosphate. Functionally, converts O-phospho-L-seryl-tRNA(Cys) (Sep-tRNA(Cys)) to L-cysteinyl-tRNA(Cys) (Cys-tRNA(Cys)). This is O-phospho-L-seryl-tRNA:Cys-tRNA synthase 2 from Methanospirillum hungatei JF-1 (strain ATCC 27890 / DSM 864 / NBRC 100397 / JF-1).